Reading from the N-terminus, the 340-residue chain is Uroporphyrinogen decarboxylase (340 aa).

Substrate is bound by residues 23–27 (RQAGR), D72, Y147, T202, and H316.

Belongs to the uroporphyrinogen decarboxylase family. Homodimer.

It is found in the cytoplasm. It catalyses the reaction uroporphyrinogen III + 4 H(+) = coproporphyrinogen III + 4 CO2. It participates in porphyrin-containing compound metabolism; protoporphyrin-IX biosynthesis; coproporphyrinogen-III from 5-aminolevulinate: step 4/4. In terms of biological role, catalyzes the decarboxylation of four acetate groups of uroporphyrinogen-III to yield coproporphyrinogen-III. The sequence is that of Uroporphyrinogen decarboxylase from Trichlorobacter lovleyi (strain ATCC BAA-1151 / DSM 17278 / SZ) (Geobacter lovleyi).